We begin with the raw amino-acid sequence, 197 residues long: Endo-1,4-beta-xylanase A (197 aa).

Positions 1 to 197 (SGTPSSTGTD…SSGTATITVT (197 aa)) constitute a GH11 domain. Glu-87 acts as the Nucleophile in catalysis. An intrachain disulfide couples Cys-111 to Cys-160. Glu-184 acts as the Proton donor in catalysis.

It belongs to the glycosyl hydrolase 11 (cellulase G) family.

Its subcellular location is the secreted. It catalyses the reaction Endohydrolysis of (1-&gt;4)-beta-D-xylosidic linkages in xylans.. Its pathway is glycan degradation; xylan degradation. Its function is as follows. Hydrolyzes xylans into xylobiose and xylose. The polypeptide is Endo-1,4-beta-xylanase A (XYNA) (Schizophyllum commune (Split gill fungus)).